Here is a 1381-residue protein sequence, read N- to C-terminus: Hepatocyte growth factor receptor (1381 aa).

An N-terminal signal peptide occupies residues 1–24 (MKAPTVLAPGILVLLFTLVQKSNG). At 25–933 (ECREALAKSE…VIVQSDQSFT (909 aa)) the chain is on the extracellular side. The 490-residue stretch at 27–516 (REALAKSEMN…TGKKITRIPL (490 aa)) folds into the Sema domain. Residues asparagine 45, asparagine 100, and asparagine 106 are each glycosylated (N-linked (GlcNAc...) asparagine). Cystine bridges form between cysteine 95–cysteine 101, cysteine 98–cysteine 160, cysteine 133–cysteine 141, and cysteine 173–cysteine 176. Asparagine 203 and asparagine 359 each carry an N-linked (GlcNAc...) asparagine glycan. Cystine bridges form between cysteine 299–cysteine 364 and cysteine 386–cysteine 398. 2 N-linked (GlcNAc...) asparagine glycosylation sites follow: asparagine 400 and asparagine 406. Intrachain disulfides connect cysteine 521-cysteine 539, cysteine 527-cysteine 562, cysteine 530-cysteine 546, and cysteine 542-cysteine 552. N-linked (GlcNAc...) asparagine glycosylation occurs at asparagine 554. 3 IPT/TIG domains span residues 564-656 (PTVY…FSYV), 658-740 (PIIT…FSYR), and 743-837 (PIVY…LIYV). Threonine 583 is a glycosylation site (O-linked (Man) threonine). Asparagine 608 and asparagine 636 each carry an N-linked (GlcNAc...) asparagine glycan. Residues threonine 677 and threonine 762 are each glycosylated (O-linked (Man) threonine). N-linked (GlcNAc...) asparagine glycans are attached at residues asparagine 786 and asparagine 880. Residues 934-956 (GVIVGVVAISIILLLLLGLFLWL) traverse the membrane as a helical segment. Residues 957–1381 (KKKKQIKDLG…QDDLDGEVDT (425 aa)) lie on the Cytoplasmic side of the membrane. Phosphoserine is present on serine 967. Threonine 978 carries the phosphothreonine modification. Residues serine 991, serine 998, and serine 1001 each carry the phosphoserine modification. At tyrosine 1004 the chain carries Phosphotyrosine. One can recognise a Protein kinase domain in the interval 1079-1346 (VHFNEVIGRG…RISAIFSTFI (268 aa)). ATP contacts are provided by residues 1085 to 1093 (IGRGHFGCV) and lysine 1111. Aspartate 1205 (proton acceptor) is an active-site residue. Positions 1213 to 1381 (LDEKFTVKVA…QDDLDGEVDT (169 aa)) are interaction with RANBP9. The residue at position 1231 (tyrosine 1231) is a Phosphotyrosine. Tyrosine 1235 and tyrosine 1236 each carry phosphotyrosine; by autocatalysis. Position 1290 is a phosphothreonine (threonine 1290). The interaction with MUC20 stretch occupies residues 1321-1360 (WHPKAEMRPSFSELVSRISAIFSTFIGEHYVHVNATYVNV). Tyrosine 1350 and tyrosine 1357 each carry phosphotyrosine; by autocatalysis. Residue tyrosine 1366 is modified to Phosphotyrosine.

It belongs to the protein kinase superfamily. Tyr protein kinase family. In terms of assembly, heterodimer made of an alpha chain (50 kDa) and a beta chain (145 kDa) which are disulfide linked. Binds PLXNB1. Interacts when phosphorylated with downstream effectors including STAT3, PIK3R1, SRC, PCLG1, GRB2 and GAB1. Interacts with SPSB1, SPSB2 and SPSB4. Interacts with INPP5D/SHIP1. When phosphorylated at Tyr-1357, interacts with INPPL1/SHIP2. Interacts with RANBP9 and RANBP10, as well as SPSB1, SPSB2, SPSB3 and SPSB4. SPSB1 binding occurs in the presence and in the absence of HGF, however HGF treatment has a positive effect on this interaction. Interacts with MUC20; prevents interaction with GRB2 and suppresses hepatocyte growth factor-induced cell proliferation. Interacts with GRB10. Interacts with PTPN1 and PTPN2. Interacts with HSP90AA1 and HSP90AB1; the interaction suppresses MET kinase activity. Interacts with tensin TNS3. Interacts (when phosphorylated) with tensin TNS4 (via SH2 domain); the interaction increases MET protein stability by inhibiting MET endocytosis and subsequent lysosomal degradation. In terms of processing, autophosphorylated in response to ligand binding on Tyr-1235 and Tyr-1236 in the kinase domain leading to further phosphorylation of Tyr-1350 and Tyr-1357 in the C-terminal multifunctional docking site. Dephosphorylated by PTPRJ at Tyr-1350 and Tyr-1366. Dephosphorylated by PTPN1 and PTPN2. Post-translationally, ubiquitinated. Ubiquitination by CBL regulates the receptor stability and activity through proteasomal degradation. O-mannosylation of IPT/TIG domains by TMEM260 is required for protein maturation. O-mannosylated residues are composed of single mannose glycans that are not elongated or modified.

The protein localises to the membrane. It carries out the reaction L-tyrosyl-[protein] + ATP = O-phospho-L-tyrosyl-[protein] + ADP + H(+). Its activity is regulated as follows. In its inactive state, the C-terminal tail interacts with the catalytic domain and inhibits the kinase activity. Upon ligand binding, the C-terminal tail is displaced and becomes phosphorylated, thus increasing the kinase activity. In terms of biological role, receptor tyrosine kinase that transduces signals from the extracellular matrix into the cytoplasm by binding to hepatocyte growth factor/HGF ligand. Regulates many physiological processes including proliferation, scattering, morphogenesis and survival. Ligand binding at the cell surface induces autophosphorylation of MET on its intracellular domain that provides docking sites for downstream signaling molecules. Following activation by ligand, interacts with the PI3-kinase subunit PIK3R1, PLCG1, SRC, GRB2, STAT3 or the adapter GAB1. Recruitment of these downstream effectors by MET leads to the activation of several signaling cascades including the RAS-ERK, PI3 kinase-AKT, or PLCgamma-PKC. The RAS-ERK activation is associated with the morphogenetic effects while PI3K/AKT coordinates prosurvival effects. During embryonic development, MET signaling plays a role in gastrulation, development and migration of muscles and neuronal precursors, angiogenesis and kidney formation. In adults, participates in wound healing as well as organ regeneration and tissue remodeling. Also promotes differentiation and proliferation of hematopoietic cells. This is Hepatocyte growth factor receptor (MET) from Dasypus novemcinctus (Nine-banded armadillo).